The primary structure comprises 913 residues: MTDPHTTTLPTQFDPTGIEPKWAARWRSEPFRADATSGKDPFTIVIPPPNVTGNLHLGHALDNTLIDTLIRYKRMAGFEALYLPGMDHAGISTQVVVERQLKDAGTSRHDLGREAFLEKVWEWKGKSGGMILDQLTRLGVSADWTRERFTMDEGLSRAVRTQFVKLYHDGLAYRGERIVNWDPASQTTLSELEIDREVRKGKMYTLSYKLENSAERGSNGETGEIRIATVRPETIFADQAIAVHPEDERFRHLVGQKARIPLTDRWVPIIADEAVEMEFGVGALKITPAHDPTDFEVGERHGLERPSVIDLDGNLTRDELVPAEFQGLERFAARKAVVKALEESGDLLEQKDHDTAIGLSERTKVPVEPIISEQWFVKMKPFADQVLEGLDKGEIKLVPERYTKVNRDWLENIRDWNISRQLWWGHQIPAWYDKEGNIYVPDPENPELDCDQDPRYAHLNLRRDPDVFDTWFSSNLWPFSTLGWPDTDSEDFRKFYPTQVLVTGYDILFFWVARMQMAGYGLTGQAPFSTVMLHGLYLDAKGQKMSKSKGNGIDPLELFGQYGVDACRFAFTFLSTGGQDIKHDARRFEQGRNFANKLWNATRFALMRLGEARIEGSDDLSAYVRAAVTLPDGVLLRSKDVLAQLKERDDLTLADRWIISRLNDVTAEASAQLDAFDIGAAIRTLYSFTWDEFCDWYIEAAKPELASGNLGTMATLKVVLEHVLKLLHPFMPFITSELYAALGHRRQIAVHSWPQPDAALHDAEATKAFDALRSAVDSARSLKSELGLSPQDRLNVAVDGDLADVVRQNARVVEGIARVNLVPALEGRTLSQVAPGVTILAPLEGTVDIADWVKKQQKRLAELDKQIKQAQGKLNNEGFVARAPAEVIEEEKRRVADFGAQKERLEGVLAQLG.

The 'HIGH' region motif lies at 49–59 (PNVTGNLHLGH). The 'KMSKS' region motif lies at 544–548 (KMSKS). Lys-547 lines the ATP pocket. Residues 851-912 (DWVKKQQKRL…ERLEGVLAQL (62 aa)) adopt a coiled-coil conformation.

It belongs to the class-I aminoacyl-tRNA synthetase family. ValS type 1 subfamily. Monomer.

The protein localises to the cytoplasm. It catalyses the reaction tRNA(Val) + L-valine + ATP = L-valyl-tRNA(Val) + AMP + diphosphate. Its function is as follows. Catalyzes the attachment of valine to tRNA(Val). As ValRS can inadvertently accommodate and process structurally similar amino acids such as threonine, to avoid such errors, it has a 'posttransfer' editing activity that hydrolyzes mischarged Thr-tRNA(Val) in a tRNA-dependent manner. The protein is Valine--tRNA ligase of Deinococcus radiodurans (strain ATCC 13939 / DSM 20539 / JCM 16871 / CCUG 27074 / LMG 4051 / NBRC 15346 / NCIMB 9279 / VKM B-1422 / R1).